Consider the following 436-residue polypeptide: Antilisterial bacteriocin subtilosin biosynthesis protein AlbD (436 aa).

Helical transmembrane passes span 27-47, 55-75, 113-133, 134-154, 164-184, 187-207, 240-260, 270-290, 315-335, and 395-415; these read IAAG…QAGI, TYII…SVTS, LFFF…GAQT, LFWL…GVVL, LMFL…ALMP, TIPL…PVFL, AMLL…FQMM, IYIV…LYSI, FYSG…GFIS, and AILA…LVIV.

It localises to the cell membrane. Involved in the production of the bacteriocin subtilosin. Required for immunity to subtilosin. The polypeptide is Antilisterial bacteriocin subtilosin biosynthesis protein AlbD (albD) (Bacillus subtilis (strain 168)).